A 530-amino-acid polypeptide reads, in one-letter code: Probable cytochrome P450 519A1 (530 aa).

A helical transmembrane segment spans residues 1–21 (MESIINLIFYIIIFLILIDFL). C476 lines the heme pocket.

This sequence belongs to the cytochrome P450 family. The cofactor is heme.

It localises to the membrane. The protein is Probable cytochrome P450 519A1 (cyp519A1) of Dictyostelium discoideum (Social amoeba).